A 288-amino-acid polypeptide reads, in one-letter code: 33 kDa chaperonin (288 aa).

Disulfide bonds link Cys-235–Cys-237 and Cys-268–Cys-271.

It belongs to the HSP33 family. Post-translationally, under oxidizing conditions two disulfide bonds are formed involving the reactive cysteines. Under reducing conditions zinc is bound to the reactive cysteines and the protein is inactive.

It localises to the cytoplasm. In terms of biological role, redox regulated molecular chaperone. Protects both thermally unfolding and oxidatively damaged proteins from irreversible aggregation. Plays an important role in the bacterial defense system toward oxidative stress. This chain is 33 kDa chaperonin, found in Streptococcus suis (strain 98HAH33).